The chain runs to 268 residues: Proenkephalin-A (268 aa).

An N-terminal signal peptide occupies residues 1–24 (MARLLRLCTWLVALGPGLLATVQA). Intrachain disulfides connect Cys-26–Cys-48, Cys-30–Cys-52, and Cys-33–Cys-65. The disordered stretch occupies residues 163–184 (TGDDRDRENHHQEGGDSDEGVS). Positions 164–176 (GDDRDRENHHQEG) are enriched in basic and acidic residues. Propeptides lie at residues 197–208 (SPQVEDEAKELQ) and 218–228 (VGRPEWWMDYQ). Ser-252 is modified (phosphoserine).

This sequence belongs to the opioid neuropeptide precursor family. Post-translationally, proenkephalin-A is cleaved by CTSL to generate Met-enkephalin. Processed and degraded by ACE. In terms of processing, probably cleaved by ACE. Post-translationally, processed by ACE to generate Met-enkephalin in the nucleus accumbens of the brain. The N-terminal domain contains 6 conserved cysteines thought to be involved in disulfide bonding and/or processing.

It localises to the cytoplasmic vesicle. It is found in the secretory vesicle. The protein resides in the chromaffin granule lumen. The protein localises to the secreted. Functionally, neuropeptide that competes with and mimic the effects of opiate drugs. They play a role in a number of physiologic functions, including pain perception and responses to stress. Its function is as follows. Met-enkephalin-Arg-Phe neuropeptide acts as a strong ligand of Mu-type opioid receptor OPRM1. Met-enkephalin-Arg-Phe-binding to OPRM1 in the nucleus accumbens of the brain increases activation of OPRM1, leading to long-term synaptic depression of glutamate release. In terms of biological role, increases glutamate release in the striatum and decreases GABA concentration in the striatum. Increases glutamate release in the striatum. In Cavia porcellus (Guinea pig), this protein is Proenkephalin-A (PENK).